Here is a 207-residue protein sequence, read N- to C-terminus: LysM and putative peptidoglycan-binding domain-containing protein 2 (207 aa).

The LysM domain maps to 61 to 105 (IEHRLSPSDTLQGIALKYGVTMEQIKRANKLFSTDCIFLRKSLNI). The tract at residues 186-207 (AQRLKEEDLRHDDSYATCSYQH) is disordered. The segment covering 188-199 (RLKEEDLRHDDS) has biased composition (basic and acidic residues).

This chain is LysM and putative peptidoglycan-binding domain-containing protein 2 (lysmd2), found in Xenopus tropicalis (Western clawed frog).